The chain runs to 204 residues: Proteasome subunit beta type-3 (204 aa).

It belongs to the peptidase T1B family. As to quaternary structure, the 26S proteasome consists of a 20S proteasome core and two 19S regulatory subunits. The 20S proteasome core is composed of 28 subunits that are arranged in four stacked rings, resulting in a barrel-shaped structure. The two end rings are each formed by seven alpha subunits, and the two central rings are each formed by seven beta subunits. The catalytic chamber with the active sites is on the inside of the barrel.

It is found in the cytoplasm. It localises to the nucleus. Functionally, non-catalytic component of the proteasome, a multicatalytic proteinase complex which is characterized by its ability to cleave peptides with Arg, Phe, Tyr, Leu, and Glu adjacent to the leaving group at neutral or slightly basic pH. The proteasome has an ATP-dependent proteolytic activity. This Caenorhabditis elegans protein is Proteasome subunit beta type-3 (pbs-3).